Reading from the N-terminus, the 444-residue chain is Endoglucanase N (444 aa).

The signal sequence occupies residues 1–31 (MWMRRNQIVRKLTLGVVTTVLGMSLSFSALS). Substrate is bound by residues His-64, 68–69 (WF), Tyr-95, and His-130. The active-site Proton donor is Glu-168. Substrate is bound at residue Tyr-230. Glu-256 acts as the Nucleophile in catalysis. Residues 262–263 (AS), Trp-290, and 295–297 (KSE) each bind substrate. The interval 332-358 (ANLGGGDTPTTPTTPTEPTNPGNGTTG) is disordered. Positions 339–358 (TPTTPTTPTEPTNPGNGTTG) are enriched in low complexity. The CBM3 domain occupies 356–444 (TTGDVVLQYR…DKANRYVLVT (89 aa)).

It belongs to the glycosyl hydrolase 5 (cellulase A) family.

It is found in the secreted. The enzyme catalyses Endohydrolysis of (1-&gt;4)-beta-D-glucosidic linkages in cellulose, lichenin and cereal beta-D-glucans.. This chain is Endoglucanase N (celN), found in Pectobacterium atrosepticum (Erwinia carotovora subsp. atroseptica).